The sequence spans 939 residues: UvrABC system protein A (939 aa).

32-39 (GLSGSGKS) is a binding site for ATP. The segment at 252–279 (CADCGISIDELAPRMFSFNSPFGKCERC) adopts a C4-type zinc-finger fold. ABC transporter domains follow at residues 309–588 (WGDS…ENSL) and 608–936 (GNGN…KYLK). 640–647 (GVSGSGKS) is a binding site for ATP. The C4-type zinc finger occupies 739 to 765 (CEACSGDGIIKIEMQFLSDVYVPCEVC).

This sequence belongs to the ABC transporter superfamily. UvrA family. In terms of assembly, forms a heterotetramer with UvrB during the search for lesions.

It localises to the cytoplasm. Functionally, the UvrABC repair system catalyzes the recognition and processing of DNA lesions. UvrA is an ATPase and a DNA-binding protein. A damage recognition complex composed of 2 UvrA and 2 UvrB subunits scans DNA for abnormalities. When the presence of a lesion has been verified by UvrB, the UvrA molecules dissociate. The protein is UvrABC system protein A of Clostridium perfringens (strain 13 / Type A).